Reading from the N-terminus, the 234-residue chain is Sugar fermentation stimulation protein A (234 aa).

A DNA-binding region (H-T-H motif) is located at residues leucine 201–serine 220.

This sequence belongs to the SfsA family.

In terms of biological role, binds to DNA non-specifically. Could be a regulatory factor involved in maltose metabolism. The polypeptide is Sugar fermentation stimulation protein A (Salmonella dublin (strain CT_02021853)).